The primary structure comprises 637 residues: Galactofuranosyltransferase GlfT2 (637 aa).

Positions 171, 200, 229, and 256 each coordinate UDP-alpha-D-galactofuranose. Mn(2+) is bound by residues Asp-256 and Asp-258. Catalysis depends on Asp-372, which acts as the Proton acceptor. His-396 contacts Mn(2+).

The protein belongs to the glycosyltransferase 2 family. Homotetramer. It depends on Mn(2+) as a cofactor. Mg(2+) is required as a cofactor.

The protein localises to the cell membrane. It carries out the reaction beta-D-galactofuranosyl-(1-&gt;5)-beta-D-galactofuranosyl-(1-&gt;4)-alpha-L-rhamnosyl-(1-&gt;3)-N-acetyl-alpha-D-glucosaminyl-diphospho-trans,octa-cis-decaprenol + 28 UDP-alpha-D-galactofuranose = [beta-D-galactofuranosyl-(1-&gt;5)-beta-D-galactofuranosyl-(1-&gt;6)]14-beta-D-galactofuranosyl-(1-&gt;5)-beta-D-galactofuranosyl-(1-&gt;4)-alpha-L-rhamnopyranosyl-(1-&gt;3)-N-acetyl-alpha-D-glucosaminyl-diphospho-trans,octa-cis-decaprenol + 28 UDP + 28 H(+). It participates in cell wall biogenesis; cell wall polysaccharide biosynthesis. Functionally, involved in the galactan polymerization of the arabinogalactan (AG) region of the mycolylarabinogalactan-peptidoglycan (mAGP) complex, an essential component of the mycobacteria cell wall. Thus, successively transfers approximately 28 galactofuranosyl (Galf) residues from UDP-galactofuranose (UDP-Galf) onto the galactofuranosyl-galactofuranosyl-rhamnosyl-GlcNAc-diphospho-decaprenol (Galf-Galf-Rha-GlcNAc-PP-C50) acceptor produced by GlfT1, with alternating 1-&gt;5 and 1-&gt;6 links, forming a galactan domain with approximately 30 galactofuranosyl residues. This chain is Galactofuranosyltransferase GlfT2, found in Mycobacterium tuberculosis (strain ATCC 25618 / H37Rv).